The chain runs to 428 residues: Spliceosome RNA helicase DDX39B (428 aa).

Positions 1–19 (MAENDVDNELLDYEEDEVE) are enriched in acidic residues. A disordered region spans residues 1–32 (MAENDVDNELLDYEEDEVETAAGGDGSEAPAK). N-acetylalanine is present on Ala2. N6-acetyllysine; alternate is present on Lys36. Lys36 is covalently cross-linked (Glycyl lysine isopeptide (Lys-Gly) (interchain with G-Cter in SUMO2); alternate). Residues Ser38 and Ser41 each carry the phosphoserine modification. The Q motif signature appears at 45-73 (SGFRDFLLKPELLRAIVDCGFEHPSEVQH). The Helicase ATP-binding domain maps to 76 to 249 (IPQAILGMDV…RKFMQDPMEI (174 aa)). 89-96 (AKSGMGKT) is an ATP binding site. Thr172 bears the Phosphothreonine mark. The DECD box motif lies at 196–199 (DECD). Positions 261–422 (GLQQYYVKLK…ELPDEIDISS (162 aa)) constitute a Helicase C-terminal domain.

The protein belongs to the DEAD box helicase family. DECD subfamily. As to quaternary structure, homodimer, and heterodimer with DDX39A. DDX39B interacts with the THO subcomplex to form the THO-DDX39B complex which multimerizes into a 28-subunit tetrameric assembly. Component of the transcription/export (TREX) complex at least composed of ALYREF/THOC4, DDX39B, SARNP/CIP29, CHTOP and the THO subcomplex; in the complex interacts with THOC2. THOC1-THOC2-THOC3-DDX39B subcomplex is sufficient for the interaction with export factor NXF1-NXT1. TREX seems to have a dynamic structure involving ATP-dependent remodeling. Within the TREX complex bridges ALYREF/THOC4 and the THO subcomplex, and, in a ATP-dependent manner, ALYREF/THOC4 and SARNP/CIP29. Component of the spliceosome. Interacts directly with U2AF2. Interacts with RBM8A, RNPS1 and SRRM1, FYTTD1/UIF, THOC1, MX1 and POLDIP3. Interacts with LUZP4. Interacts with SARNP/CIP29 (via the C-terminal domain); the interaction is direct and facilitates RNA binding of DDX39B.

It localises to the nucleus. The protein localises to the nucleus speckle. Its subcellular location is the cytoplasm. The enzyme catalyses ATP + H2O = ADP + phosphate + H(+). Involved in nuclear export of spliced and unspliced mRNA. Component of the TREX complex which is thought to couple mRNA transcription, processing and nuclear export, and specifically associates with spliced mRNA and not with unspliced pre-mRNA. The TREX complex is recruited to spliced mRNAs by a transcription-independent mechanism, binds to mRNA upstream of the exon-junction complex (EJC) and is recruited in a splicing- and cap-dependent manner to a region near the 5' end of the mRNA where it functions in mRNA export to the cytoplasm via the TAP/NXF1 pathway. The THOC1-THOC2-THOC3 core complex alone is sufficient to promote ATPase activity of DDX39B; in the complex THOC2 is the only component that directly interacts with DDX39B. Associates with SARNP/CIP29, which facilitates RNA binding of DDX39B and likely plays a role in mRNA export. May undergo several rounds of ATP hydrolysis during assembly of TREX to drive subsequent loading of components such as ALYREF/THOC4 and CHTOP onto mRNA. Also associates with pre-mRNA independent of ALYREF/THOC4. Involved in the nuclear export of intronless mRNA; the ATP-bound form is proposed to recruit export adapter ALYREF/THOC4 to intronless mRNA; its ATPase activity is cooperatively stimulated by RNA and ALYREF/THOC4 and ATP hydrolysis is thought to trigger the dissociation from RNA to allow the association of ALYREF/THOC4 and the NXF1-NXT1 heterodimer. Involved in transcription elongation and genome stability. Functionally, splice factor that is required for the first ATP-dependent step in spliceosome assembly and for the interaction of U2 snRNP with the branchpoint. Has both RNA-stimulated ATP binding/hydrolysis activity and ATP-dependent RNA unwinding activity. Even with the stimulation of RNA, the ATPase activity is weak. Can only hydrolyze ATP but not other NTPs. The RNA stimulation of ATPase activity does not have a strong preference for the sequence and length of the RNA. However, ssRNA stimulates the ATPase activity much more strongly than dsRNA. Can unwind 5' or 3' overhangs or blunt end RNA duplexes in vitro. The ATPase and helicase activities are not influenced by U2AF2; the effect of ALYREF/THOC4 is reported conflictingly. The protein is Spliceosome RNA helicase DDX39B (DDX39B) of Canis lupus familiaris (Dog).